We begin with the raw amino-acid sequence, 420 residues long: Corticotropin-releasing factor receptor 1 (420 aa).

Residues 1–28 (MVPGPRPALLLLLFLLQAFLLWDSPVAA) form the signal peptide. Residues 29 to 116 (SIQEQYCESL…CQEILSEEKR (88 aa)) lie on the Extracellular side of the membrane. Intrachain disulfides connect Cys35–Cys59, Cys49–Cys92, and Cys73–Cys107. Residues Asn43, Asn50, Asn83, Asn95, and Asn103 are each glycosylated (N-linked (GlcNAc...) asparagine). Residues 117-147 (SKLHYHIAVIINYLGHCVSLGTLLVAFVLFM) traverse the membrane as a helical segment. Residues 148 to 154 (RLRSIRC) lie on the Cytoplasmic side of the membrane. A helical membrane pass occupies residues 155 to 179 (LRNIIHWNLITAFILRNATWFVVQL). Over 180-194 (TMNPEVHESNVVWCR) the chain is Extracellular. Cys193 and Cys263 are disulfide-bonded. Residues 195–223 (LVTAAYNYFHVTNFFWMFGEGCYLHTAIV) form a helical membrane-spanning segment. At 224 to 230 (LTYSTDK) the chain is on the cytoplasmic side. The helical transmembrane segment at 231–258 (LRKWMFICIGWCIPFPIIVAWAIGKLYY) threads the bilayer. Over 259-274 (DNEKCWFGKRAGVYTD) the chain is Extracellular. A helical transmembrane segment spans residues 275-300 (YIYQGPMILVLLINFIFLFNIVRILM). Over 301-311 (TKLRASTTSET) the chain is Cytoplasmic. The helical transmembrane segment at 312–336 (IQYRKAVKATLVLLSLLGITYMLFF) threads the bilayer. The Extracellular segment spans residues 337–343 (VNPGEDE). A helical transmembrane segment spans residues 344–373 (ISRIVFIYFNSFLESFQGFFVSVFYCFLNS). Topologically, residues 374–420 (EVRSAVRKRWHRWQDKHSIRARVARAMSIPTSPTRVSFHSIKQSSAV) are cytoplasmic.

The protein belongs to the G-protein coupled receptor 2 family. In terms of assembly, interacts (via N-terminal extracellular domain) with CRF and UCN.

Its subcellular location is the cell membrane. G-protein coupled receptor for CRH (corticotropin-releasing factor) and UCN (urocortin). Has high affinity for CRH and UCN. Ligand binding causes a conformation change that triggers signaling via guanine nucleotide-binding proteins (G proteins) and down-stream effectors, such as adenylate cyclase. Promotes the activation of adenylate cyclase, leading to increased intracellular cAMP levels. The polypeptide is Corticotropin-releasing factor receptor 1 (CRHR1) (Gallus gallus (Chicken)).